Consider the following 212-residue polypeptide: Tubulin alpha chain (212 aa).

Residues asparagine 3 and asparagine 25 each coordinate GTP. Glutamate 51 is an active-site residue.

This sequence belongs to the tubulin family. Dimer of alpha and beta chains. A typical microtubule is a hollow water-filled tube with an outer diameter of 25 nm and an inner diameter of 15 nM. Alpha-beta heterodimers associate head-to-tail to form protofilaments running lengthwise along the microtubule wall with the beta-tubulin subunit facing the microtubule plus end conferring a structural polarity. Microtubules usually have 13 protofilaments but different protofilament numbers can be found in some organisms and specialized cells. It depends on Mg(2+) as a cofactor.

The protein localises to the cytoplasm. It localises to the cytoskeleton. It carries out the reaction GTP + H2O = GDP + phosphate + H(+). Its function is as follows. Tubulin is the major constituent of microtubules, a cylinder consisting of laterally associated linear protofilaments composed of alpha- and beta-tubulin heterodimers. Microtubules grow by the addition of GTP-tubulin dimers to the microtubule end, where a stabilizing cap forms. Below the cap, tubulin dimers are in GDP-bound state, owing to GTPase activity of alpha-tubulin. The protein is Tubulin alpha chain (TUB-A) of Pneumocystis carinii.